A 620-amino-acid chain; its full sequence is MAU2 chromatid cohesion factor homolog (620 aa).

TPR repeat units lie at residues 452–485 and 492–525; these read GGFYYVQGLHAFHKNSFHEAKRFLRETLKMANAE and SCSLVLLSHVFLSIGNSKESMNMVTPAMQLASKI.

This sequence belongs to the SCC4/mau-2 family. As to quaternary structure, interacts with Nipped-B to form the cohesin loading complex.

It is found in the nucleus. The protein localises to the nucleoplasm. Required for association of the cohesin complex with chromatin during interphase. Plays a role in sister chromatid cohesion and normal progression through prometaphase. This Drosophila persimilis (Fruit fly) protein is MAU2 chromatid cohesion factor homolog.